The primary structure comprises 95 residues: Small ribosomal subunit protein uS14 (95 aa).

This sequence belongs to the universal ribosomal protein uS14 family. In terms of assembly, part of the 30S ribosomal subunit. Contacts proteins S3 and S10.

Functionally, binds 16S rRNA, required for the assembly of 30S particles and may also be responsible for determining the conformation of the 16S rRNA at the A site. The chain is Small ribosomal subunit protein uS14 from Fusobacterium nucleatum subsp. nucleatum (strain ATCC 25586 / DSM 15643 / BCRC 10681 / CIP 101130 / JCM 8532 / KCTC 2640 / LMG 13131 / VPI 4355).